The sequence spans 463 residues: Fumarate hydratase class II (463 aa).

Substrate is bound by residues 97–99 (SGT), 128–131 (HPND), 138–140 (SSN), and T186. Catalysis depends on H187, which acts as the Proton donor/acceptor. S317 is an active-site residue. Residues S318 and 323 to 325 (KVN) contribute to the substrate site.

This sequence belongs to the class-II fumarase/aspartase family. Fumarase subfamily. Homotetramer.

Its subcellular location is the cytoplasm. The catalysed reaction is (S)-malate = fumarate + H2O. The protein operates within carbohydrate metabolism; tricarboxylic acid cycle; (S)-malate from fumarate: step 1/1. Its function is as follows. Involved in the TCA cycle. Catalyzes the stereospecific interconversion of fumarate to L-malate. The polypeptide is Fumarate hydratase class II (Helicobacter pylori (strain ATCC 700392 / 26695) (Campylobacter pylori)).